Reading from the N-terminus, the 156-residue chain is Small ribosomal subunit protein uS7 (156 aa).

The protein belongs to the universal ribosomal protein uS7 family. As to quaternary structure, part of the 30S ribosomal subunit. Contacts proteins S9 and S11.

Functionally, one of the primary rRNA binding proteins, it binds directly to 16S rRNA where it nucleates assembly of the head domain of the 30S subunit. Is located at the subunit interface close to the decoding center, probably blocks exit of the E-site tRNA. The polypeptide is Small ribosomal subunit protein uS7 (Enterobacter sp. (strain 638)).